We begin with the raw amino-acid sequence, 204 residues long: NADH-quinone oxidoreductase subunit C (204 aa).

It belongs to the complex I 30 kDa subunit family. NDH-1 is composed of 14 different subunits. Subunits NuoB, C, D, E, F, and G constitute the peripheral sector of the complex.

Its subcellular location is the cell inner membrane. It carries out the reaction a quinone + NADH + 5 H(+)(in) = a quinol + NAD(+) + 4 H(+)(out). Its function is as follows. NDH-1 shuttles electrons from NADH, via FMN and iron-sulfur (Fe-S) centers, to quinones in the respiratory chain. The immediate electron acceptor for the enzyme in this species is believed to be ubiquinone. Couples the redox reaction to proton translocation (for every two electrons transferred, four hydrogen ions are translocated across the cytoplasmic membrane), and thus conserves the redox energy in a proton gradient. This chain is NADH-quinone oxidoreductase subunit C, found in Rhodopseudomonas palustris (strain ATCC BAA-98 / CGA009).